Here is a 249-residue protein sequence, read N- to C-terminus: Small ribosomal subunit protein uS3 (249 aa).

One can recognise a KH type-2 domain in the interval isoleucine 38–lysine 106. Residues alanine 218–arginine 233 show a composition bias toward basic and acidic residues. Residues alanine 218–glycine 249 form a disordered region.

This sequence belongs to the universal ribosomal protein uS3 family. Part of the 30S ribosomal subunit. Forms a tight complex with proteins S10 and S14.

Binds the lower part of the 30S subunit head. Binds mRNA in the 70S ribosome, positioning it for translation. This chain is Small ribosomal subunit protein uS3, found in Corynebacterium kroppenstedtii (strain DSM 44385 / JCM 11950 / CIP 105744 / CCUG 35717).